A 157-amino-acid chain; its full sequence is Isotocin-neurophysin IT 1 (157 aa).

The first 20 residues, Met-1–Ala-20, serve as a signal peptide directing secretion. A disulfide bridge links Cys-21 with Cys-26. A Glycine amide modification is found at Gly-29. Disulfide bonds link Cys-42–Cys-86, Cys-45–Cys-59, Cys-53–Cys-76, Cys-60–Cys-66, Cys-93–Cys-106, Cys-100–Cys-118, and Cys-107–Cys-112.

Belongs to the vasopressin/oxytocin family. Post-translationally, seven disulfide bonds are present in neurophysin.

The protein localises to the secreted. Its function is as follows. Isotocin causes contraction of smooth muscles. In Oncorhynchus keta (Chum salmon), this protein is Isotocin-neurophysin IT 1.